We begin with the raw amino-acid sequence, 192 residues long: Flagellar transcriptional regulator FlhC (192 aa).

Zn(2+) contacts are provided by Cys-137, Cys-140, Cys-157, and Cys-160.

The protein belongs to the FlhC family. As to quaternary structure, heterohexamer composed of two FlhC and four FlhD subunits. Each FlhC binds a FlhD dimer, forming a heterotrimer, and a hexamer assembles by dimerization of two heterotrimers. It depends on Zn(2+) as a cofactor.

It is found in the cytoplasm. Functions in complex with FlhD as a master transcriptional regulator that regulates transcription of several flagellar and non-flagellar operons by binding to their promoter region. Activates expression of class 2 flagellar genes, including fliA, which is a flagellum-specific sigma factor that turns on the class 3 genes. Also regulates genes whose products function in a variety of physiological pathways. This Escherichia coli O6:H1 (strain CFT073 / ATCC 700928 / UPEC) protein is Flagellar transcriptional regulator FlhC.